A 1037-amino-acid polypeptide reads, in one-letter code: Probable aminoglycoside efflux pump (1037 aa).

Topologically, residues 1–9 (MANFFIDRP) are cytoplasmic. The helical transmembrane segment at 10 to 28 (IFAWVLAILLCLTGTLAIF) threads the bilayer. Over 29–339 (SLPVEQYPDL…TSFVKASIED (311 aa)) the chain is Periplasmic. The helical transmembrane segment at 340–359 (VVKTLLEAIALVFLVMYLFL) threads the bilayer. At 360–365 (QNFRAT) the chain is on the cytoplasmic side. The helical transmembrane segment at 366–385 (LIPTIAVPVVLMGTFSVLYA) threads the bilayer. At 386–391 (FGYSVN) the chain is on the periplasmic side. Residues 392-413 (TLTMFAMVLAIGLLVDDAIVVV) form a helical membrane-spanning segment. Topologically, residues 414–441 (ENVERIMSEEGLTPREATRKSMGQIQGA) are cytoplasmic. Residues 442–460 (LVGIAMVLSAVFVPMAFFG) traverse the membrane as a helical segment. The Periplasmic segment spans residues 461-473 (GTTGAIYRQFSIT). A helical membrane pass occupies residues 474–496 (IVAAMVLSVLVAMILTPALCATL). Residues 497–537 (LKPLKKGEHHGQKGFFAWFNQMFNRNAERYEKGVAKILHRS) lie on the Cytoplasmic side of the membrane. Residues 538 to 556 (LRWIVIYVLLLGGMVFLFL) traverse the membrane as a helical segment. The Periplasmic portion of the chain corresponds to 557 to 870 (RLPTSFLPLE…SYQERLSGAQ (314 aa)). Residues 871 to 890 (APALYAISLLVVFLCLAALY) form a helical membrane-spanning segment. The Cytoplasmic segment spans residues 891 to 896 (ESWSVP). Residues 897 to 916 (FSVMLVVPLGVIGALLATWM) form a helical membrane-spanning segment. Residues 917-922 (RGLEND) lie on the Periplasmic side of the membrane. The helical transmembrane segment at 923–944 (VYFQVGLLTVIGLSAKNAILIV) threads the bilayer. Topologically, residues 945-971 (EFANEMNQKGHDLFEATLHACRQRLRP) are cytoplasmic. Residues 972–990 (ILMTSLAFIFGVLPMATST) traverse the membrane as a helical segment. Residues 991–1003 (GAGSGGQHAVGTG) lie on the Periplasmic side of the membrane. Residues 1004 to 1026 (VMGGMISATILAIYFVPLFFVLV) form a helical membrane-spanning segment. Residues 1027 to 1037 (RRRFPLKPRPE) lie on the Cytoplasmic side of the membrane.

The protein belongs to the resistance-nodulation-cell division (RND) (TC 2.A.6) family.

It localises to the cell inner membrane. Functionally, participates in the efflux of aminoglycosides. Confers resistance to a variety of these substances. The polypeptide is Probable aminoglycoside efflux pump (acrD) (Escherichia coli (strain K12)).